Consider the following 201-residue polypeptide: MELVLKDAQSALEVSEATFGRDFNEALVHQVVVAYAANARQGTRAQKTRAEVTGSGKKPWRQKGTGRARAGTVKGPIWRGGGVTFAAKTQDHSQKVNKKMYRGALKSIFSELVRQDRLIVVESFGVEAPKTKELKAKLNEMQLEDVLIVTPEVDENLFLAARNLYKVDVRDVAGIDPVSLIAFNKVLVTAEAIKQIEEMLG.

The segment at 45–71 (AQKTRAEVTGSGKKPWRQKGTGRARAG) is disordered.

Belongs to the universal ribosomal protein uL4 family. As to quaternary structure, part of the 50S ribosomal subunit.

In terms of biological role, one of the primary rRNA binding proteins, this protein initially binds near the 5'-end of the 23S rRNA. It is important during the early stages of 50S assembly. It makes multiple contacts with different domains of the 23S rRNA in the assembled 50S subunit and ribosome. Its function is as follows. Forms part of the polypeptide exit tunnel. This is Large ribosomal subunit protein uL4 from Shewanella pealeana (strain ATCC 700345 / ANG-SQ1).